The sequence spans 256 residues: uncharacterized protein (256 aa).

An S4 RNA-binding domain is found at 16-83 (VRLQKILSRA…DSLVYLALNK (68 aa)). Aspartate 121 functions as the Nucleophile in the catalytic mechanism.

Belongs to the pseudouridine synthase RsuA family.

It catalyses the reaction a uridine in RNA = a pseudouridine in RNA. This is an uncharacterized protein from Mycobacterium leprae (strain TN).